A 201-amino-acid chain; its full sequence is ATP-dependent Clp protease proteolytic subunit (201 aa).

Serine 98 acts as the Nucleophile in catalysis. Residue histidine 123 is part of the active site.

It belongs to the peptidase S14 family. Fourteen ClpP subunits assemble into 2 heptameric rings which stack back to back to give a disk-like structure with a central cavity, resembling the structure of eukaryotic proteasomes.

The protein resides in the cytoplasm. It catalyses the reaction Hydrolysis of proteins to small peptides in the presence of ATP and magnesium. alpha-casein is the usual test substrate. In the absence of ATP, only oligopeptides shorter than five residues are hydrolyzed (such as succinyl-Leu-Tyr-|-NHMec, and Leu-Tyr-Leu-|-Tyr-Trp, in which cleavage of the -Tyr-|-Leu- and -Tyr-|-Trp bonds also occurs).. In terms of biological role, cleaves peptides in various proteins in a process that requires ATP hydrolysis. Has a chymotrypsin-like activity. Plays a major role in the degradation of misfolded proteins. This chain is ATP-dependent Clp protease proteolytic subunit, found in Neorickettsia sennetsu (strain ATCC VR-367 / Miyayama) (Ehrlichia sennetsu).